The primary structure comprises 395 residues: Serine-type anaerobic sulfatase-maturating enzyme (395 aa).

The region spanning 18-249 (PRSPVPFHIL…QWRKRCDRGR (232 aa)) is the Radical SAM core domain. The [4Fe-4S] cluster site is built by Cys-35 and Cys-39. Tyr-41 contacts S-adenosyl-L-methionine. Cys-42 contacts [4Fe-4S] cluster. S-adenosyl-L-methionine contacts are provided by Gly-84 and Arg-152. Residues Cys-270, Cys-276, and Cys-291 each coordinate [4Fe-4S] cluster. The active-site Proton acceptor is the Asp-292. 5 residues coordinate [4Fe-4S] cluster: Cys-331, Cys-334, Cys-340, Cys-344, and Cys-357.

Belongs to the radical SAM superfamily. Anaerobic sulfatase-maturating enzyme family. Monomer. Interacts with AtsA prior to its export to the periplasm. This interaction depends on the presence of AtsA 'Ser-72'. Binding of SAM to AtsB promotes the formation of a ternary AtsA-AtsB-SAM complex. It depends on [4Fe-4S] cluster as a cofactor.

Its subcellular location is the cytoplasm. The enzyme catalyses L-seryl-[sulfatase] + S-adenosyl-L-methionine = 3-oxo-L-alanyl-[sulfatase] + 5'-deoxyadenosine + L-methionine + H(+). It participates in protein modification; sulfatase oxidation. With respect to regulation, activity is inhibited by iron chelators. Its function is as follows. Involved in 'Ser-type' sulfatase maturation under anaerobic conditions. Catalyzes the post-translational modification of serine ('Ser-72' in the arylsulfatase AtsA) into 3-oxoalanine (also known as C(alpha)-formylglycine (FGly)), by a free radical chemical mechanism initiated via the reductive cleavage of S-adenosyl-L-methionine (SAM). Is capable of catalyzing multiple turnovers. In vitro, use of a peptide substrate in which the target serine is changed to cysteine also gives rise to turnover, supporting approximately 4-fold the activity of that observed with the natural substrate. This chain is Serine-type anaerobic sulfatase-maturating enzyme, found in Klebsiella pneumoniae.